The sequence spans 149 residues: Calmodulin-2 (149 aa).

4 EF-hand domains span residues 8–43 (DQIS…LGQN), 44–79 (PTEA…KMKD), 81–116 (DSEE…LGEK), and 117–149 (LTDE…MMAK). Residues aspartate 21, aspartate 23, aspartate 25, cysteine 27, glutamate 32, aspartate 57, aspartate 59, asparagine 61, threonine 63, glutamate 68, aspartate 94, aspartate 96, asparagine 98, glutamate 105, aspartate 130, aspartate 132, aspartate 134, glutamine 136, and glutamate 141 each coordinate Ca(2+).

The protein belongs to the calmodulin family. As to quaternary structure, interacts with KCBP and CIP111. Binds to IQD1 and IQD20.

It localises to the cytoplasm. It is found in the cytoskeleton. In terms of biological role, calmodulin mediates the control of a large number of enzymes, ion channels and other proteins by Ca(2+). Among the enzymes to be stimulated by the calmodulin-Ca(2+) complex are a number of protein kinases and phosphatases. The protein is Calmodulin-2 (CAM2) of Arabidopsis thaliana (Mouse-ear cress).